The sequence spans 77 residues: MKLTCVLIVAVLFLTACQLIAADDSRDLKRFSRRKMRDGMLNTKNTEEGCLPPLSLCTMADDECCHDCILFLCLVSP.

The N-terminal stretch at 1–22 (MKLTCVLIVAVLFLTACQLIAA) is a signal peptide. Residues 23-44 (DDSRDLKRFSRRKMRDGMLNTK) constitute a propeptide that is removed on maturation. Disulfide bonds link Cys50–Cys65, Cys57–Cys68, and Cys64–Cys73.

The protein belongs to the conotoxin O1 superfamily. As to expression, expressed by the venom duct.

The protein localises to the secreted. The chain is Conotoxin ArMKLT2-0122 from Conus arenatus (Sand-dusted cone).